The following is an 85-amino-acid chain: uncharacterized protein (85 aa).

Residues 39–59 (FILFEISMYIIFIVTFCYKII) traverse the membrane as a helical segment.

Its subcellular location is the host membrane. This is an uncharacterized protein from Gallid herpesvirus 2 (strain Chicken/Md5/ATCC VR-987) (GaHV-2).